The sequence spans 359 residues: Serpentine receptor class epsilon-33 (359 aa).

Helical transmembrane passes span 29-49 (VIIS…VNVS), 65-85 (ILAL…FITI), 134-156 (YMYS…SVLI), 168-188 (PAIL…GLLF), 194-214 (LSAH…YVFV), 255-275 (LVFA…ALHY), and 285-305 (LIEN…MLSI).

It belongs to the nematode receptor-like protein sre family.

It is found in the membrane. This chain is Serpentine receptor class epsilon-33 (sre-33), found in Caenorhabditis elegans.